The primary structure comprises 235 residues: Segregation and condensation protein A (235 aa).

The protein belongs to the ScpA family. As to quaternary structure, component of a cohesin-like complex composed of ScpA, ScpB and the Smc homodimer, in which ScpA and ScpB bind to the head domain of Smc. The presence of the three proteins is required for the association of the complex with DNA.

The protein resides in the cytoplasm. In terms of biological role, participates in chromosomal partition during cell division. May act via the formation of a condensin-like complex containing Smc and ScpB that pull DNA away from mid-cell into both cell halves. The polypeptide is Segregation and condensation protein A (Streptococcus agalactiae serotype III (strain NEM316)).